We begin with the raw amino-acid sequence, 1393 residues long: DNA-directed RNA polymerase subunit beta'' (1393 aa).

Zn(2+) contacts are provided by C224, C295, C302, and C305.

The protein belongs to the RNA polymerase beta' chain family. RpoC2 subfamily. In terms of assembly, in plastids the minimal PEP RNA polymerase catalytic core is composed of four subunits: alpha, beta, beta', and beta''. When a (nuclear-encoded) sigma factor is associated with the core the holoenzyme is formed, which can initiate transcription. Requires Zn(2+) as cofactor.

It localises to the plastid. The protein resides in the chloroplast. The enzyme catalyses RNA(n) + a ribonucleoside 5'-triphosphate = RNA(n+1) + diphosphate. In terms of biological role, DNA-dependent RNA polymerase catalyzes the transcription of DNA into RNA using the four ribonucleoside triphosphates as substrates. In Manihot esculenta (Cassava), this protein is DNA-directed RNA polymerase subunit beta''.